The chain runs to 533 residues: Pre-mRNA-splicing factor cwf24 (533 aa).

Over residues 1 to 17 the composition is skewed to polar residues; it reads MEQKNLNINQASGSKIN. The interval 1–69 is disordered; it reads MEQKNLNINQ…MRDNIPIVSG (69 aa). The segment covering 27–43 has biased composition (basic residues); the sequence is SRRRHRPRQGLKRKKGF. Residues 184–212 form a C3H1-type zinc finger; the sequence is DYQPDVCKDYKLTGYCGYGDTCKFLHMRE. The RING-type zinc-finger motif lies at 254–292; that stretch reads CLICKKDYRSPIATTCGHHFCEQCAITRYRKTPTCIQCG. An N-acetyltransferase domain is found at 379–524; that stretch reads YFIREITESN…SAFYMVCPLS (146 aa).

Belongs to the CWC24 family. As to quaternary structure, belongs to the 40S cdc5-associated complex (or cwf complex), a spliceosome sub-complex reminiscent of a late-stage spliceosome composed of the U2, U5 and U6 snRNAs and at least brr2, cdc5, cwf2/prp3, cwf3/syf1, cwf4/syf3, cwf5/ecm2, spp42/cwf6, cwf7/spf27, cwf8, cwf9, cwf10, cwf11, cwf12, prp45/cwf13, cwf14, cwf15, cwf16, cwf17, cwf18, cwf19, cwf20, cwf21, cwf22, cwf23, cwf24, cwf25, cwf26, cyp7/cwf27, cwf28, cwf29/ist3, lea1, msl1, prp5/cwf1, prp10, prp12/sap130, prp17, prp22, sap61, sap62, sap114, sap145, slu7, smb1, smd1, smd3, smf1, smg1 and syf2.

The protein resides in the nucleus. Involved in mRNA splicing. The chain is Pre-mRNA-splicing factor cwf24 (cwf24) from Schizosaccharomyces pombe (strain 972 / ATCC 24843) (Fission yeast).